The sequence spans 136 residues: General odorant-binding protein 57e (136 aa).

The first 20 residues, 1–20, serve as a signal peptide directing secretion; sequence MLDQLTLCLLLNFLCANVLA. Intrachain disulfides connect cysteine 28-cysteine 61, cysteine 57-cysteine 109, and cysteine 98-cysteine 118.

It belongs to the PBP/GOBP family.

In terms of biological role, present in the aqueous fluid surrounding olfactory sensory dendrites and are thought to aid in the capture and transport of hydrophobic odorants into and through this fluid. The sequence is that of General odorant-binding protein 57e from Drosophila melanogaster (Fruit fly).